The following is a 520-amino-acid chain: Developmental regulatory protein wetA (520 aa).

3 stretches are compositionally biased toward polar residues: residues 109–118, 155–165, and 378–392; these read TATHALSISP, QSFSPSLMRSS, and SSQK…SQVH. Disordered regions lie at residues 109–165, 378–454, and 468–496; these read TATH…MRSS, SSQK…SNKS, and KKIL…RRRK. Residues 420–429 show a composition bias toward basic residues; that stretch reads PTHRRTHSRK. Low complexity predominate over residues 445–454; sequence SSSSRGSNKS.

This sequence belongs to the wetA family.

Its function is as follows. BrlA, abaA and wetA are pivotal regulators of conidiophore development and conidium maturation. They act individually and together to regulate their own expression and that of numerous other sporulation-specific genes. The protein is Developmental regulatory protein wetA of Penicillium roqueforti (strain FM164).